Consider the following 456-residue polypeptide: Chromosomal replication initiator protein DnaA 1 (456 aa).

The segment at 1-68 is domain I, interacts with DnaA modulators; sequence MRAWEEFLLL…KASLINNNGK (68 aa). The domain II stretch occupies residues 68–101; that stretch reads KPIRVRVTSLDKSTPFKETQIQQEKTAYFTMKYG. The tract at residues 102 to 320 is domain III, AAA+ region; the sequence is DIDPNMSFAN…HALTTLAKRV (219 aa). Positions 150, 152, 153, and 154 each coordinate ATP. The interval 321–456 is domain IV, binds dsDNA; sequence AYKKLSHQML…AYQSLDFIED (136 aa).

The protein belongs to the DnaA family. As to quaternary structure, oligomerizes as a right-handed, spiral filament on DNA at oriC.

It localises to the cytoplasm. Functionally, plays an essential role in the initiation and regulation of chromosomal replication. ATP-DnaA binds to the origin of replication (oriC) to initiate formation of the DNA replication initiation complex once per cell cycle. Binds the DnaA box (a 9 base pair repeat at the origin) and separates the double-stranded (ds)DNA. Forms a right-handed helical filament on oriC DNA; dsDNA binds to the exterior of the filament while single-stranded (ss)DNA is stabiized in the filament's interior. The ATP-DnaA-oriC complex binds and stabilizes one strand of the AT-rich DNA unwinding element (DUE), permitting loading of DNA polymerase. After initiation quickly degrades to an ADP-DnaA complex that is not apt for DNA replication. Binds acidic phospholipids. This chain is Chromosomal replication initiator protein DnaA 1, found in Chlamydia trachomatis serovar D (strain ATCC VR-885 / DSM 19411 / UW-3/Cx).